We begin with the raw amino-acid sequence, 61 residues long: U-stichotoxin-Hcr1b (61 aa).

A signal peptide spans 1 to 19; sequence PILIFAFVMFAVMVNAKPS. Positions 20 to 31 are excised as a propeptide; it reads IDDAEMKREPKP. 2 disulfides stabilise this stretch: cysteine 38–cysteine 49 and cysteine 41–cysteine 56.

The protein belongs to the Hau1a/HC18/HC19 family.

Its subcellular location is the secreted. It is found in the nematocyst. Functionally, toxin that is lethal to crab. Does not produce the typical symptoms associated with sodium channel toxins in crabs, suggesting that it likely does not act on sodium channels. This Radianthus crispa (Leathery sea anemone) protein is U-stichotoxin-Hcr1b.